The chain runs to 148 residues: Photosystem II extrinsic protein U, chloroplastic (148 aa).

A chloroplast-targeting transit peptide spans 1–32 (MKLAVFAVLISTVAAFVAPNGVQRAATTELNA). Residues 33–54 (ERREFLSAAAVAAGLAFPLTAN) constitute a thylakoid transit peptide.

This sequence belongs to the PsbU family. In terms of assembly, PSII is composed of 1 copy each of membrane proteins PsbA, PsbB, PsbC, PsbD, PsbE, PsbF, PsbH, PsbI, PsbJ, PsbK, PsbL, PsbM, PsbT, PsbX, PsbY, PsbZ, Psb30/Ycf12, at least 3 peripheral proteins of the oxygen-evolving complex and a large number of cofactors. It forms dimeric complexes. The oxygen-evolving complex may be composed of PsbO, PsbQ', PsbV and PsbU.

The protein resides in the plastid. Its subcellular location is the chloroplast thylakoid membrane. In terms of biological role, one of the extrinsic, lumenal subunits of photosystem II (PSII), which stabilize and protect the oxygen-evolving complex. PSII is a light-driven water plastoquinone oxidoreductase, using light energy to abstract electrons from H(2)O, generating a proton gradient subsequently used for ATP formation. Stabilizes the structure of photosystem II oxygen-evolving complex (OEC), the ion environment of oxygen evolution and protects the OEC against heat-induced inactivation. This Phaeodactylum tricornutum (Diatom) protein is Photosystem II extrinsic protein U, chloroplastic.